Reading from the N-terminus, the 364-residue chain is DNA primase large subunit PriL (364 aa).

Cys-237, Cys-309, Cys-318, and Cys-325 together coordinate [4Fe-4S] cluster. The interval 345–364 (MQNDNEKGHEEKKEGETPPQ) is disordered.

The protein belongs to the eukaryotic-type primase large subunit family. As to quaternary structure, heterodimer of a small subunit (PriS) and a large subunit (PriL). [4Fe-4S] cluster is required as a cofactor.

Regulatory subunit of DNA primase, an RNA polymerase that catalyzes the synthesis of short RNA molecules used as primers for DNA polymerase during DNA replication. Stabilizes and modulates the activity of the small subunit, increasing the rate of DNA synthesis, and conferring RNA synthesis capability. The DNA polymerase activity may enable DNA primase to also catalyze primer extension after primer synthesis. May also play a role in DNA repair. The chain is DNA primase large subunit PriL from Methanococcoides burtonii (strain DSM 6242 / NBRC 107633 / OCM 468 / ACE-M).